The chain runs to 329 residues: Transcription factor RAX1 (329 aa).

2 HTH myb-type domains span residues 9 to 62 and 63 to 117; these read KTKV…LNYL and RPNI…RKKL. DNA-binding regions (H-T-H motif) lie at residues 38–62 and 90–113; these read WISFPLKAGLRRCGKSCRLRWLNYL and WSIIAAHLPGRTDNDIKNYWNTKL. 2 stretches are compositionally biased toward low complexity: residues 122–131 and 144–154; these read SDSSSSAMAS and PTSPTTIPSSS. Residues 122–162 are disordered; sequence SDSSSSAMASPYLNPISQDVKRPTSPTTIPSSSYNPYAENP.

In terms of tissue distribution, mostly expressed in roots. Also present in shoot tips and flower buds.

It is found in the nucleus. Transcription activator of genes involved in the regulation of meristematic competence, such as CUC2. Positively regulates axillary meristems (AMs) formation and development, especially at early phases of vegetative growth, probably by specifying a stem cell niche for AM formation. Modulates the negative regulation mediated by gibberellic acid on the timing of developmental phase transitions. The protein is Transcription factor RAX1 (RAX1) of Arabidopsis thaliana (Mouse-ear cress).